A 277-amino-acid polypeptide reads, in one-letter code: Deoxyguanosine kinase, mitochondrial (277 aa).

The transit peptide at 1–39 (MAAGRFLLRRLRASFRSPLRNALVDAPHARAMHDGGGPR) directs the protein to the mitochondrion. Residue 45-53 (GNIAVGKST) participates in ATP binding. The substrate site is built by Glu70, Tyr100, Gln111, and Arg118. The active-site Proton acceptor is the Glu141. Arg142 and Asp147 together coordinate substrate. An ATP-binding site is contributed by 206 to 208 (RDR). Residue Glu211 participates in substrate binding. Position 254–256 (254–256 (EDF)) interacts with ATP.

The protein belongs to the DCK/DGK family. In terms of assembly, homodimer. As to expression, spleen and thymus. Expressed at much lower levels in the brain and liver.

The protein localises to the mitochondrion. It localises to the cytoplasm. The catalysed reaction is 2'-deoxyguanosine + ATP = dGMP + ADP + H(+). The enzyme catalyses 2'-deoxyadenosine + ATP = dAMP + ADP + H(+). Phosphorylates deoxyguanosine and deoxyadenosine in the mitochondrial matrix, with the highest efficiency for deoxyguanosine. In non-replicating cells, where cytosolic dNTP synthesis is down-regulated, mtDNA synthesis depends solely on DGUOK and TK2. Phosphorylates certain nucleoside analogs. Widely used as target of antiviral and chemotherapeutic agents. This Mus musculus (Mouse) protein is Deoxyguanosine kinase, mitochondrial (Dguok).